Consider the following 67-residue polypeptide: Alpha-like toxin Lqh3 (67 aa).

An LCN-type CS-alpha/beta domain is found at 2-66 (RDGYIAQPEN…GIIVEGEKCH (65 aa)). 4 disulfides stabilise this stretch: cysteine 12–cysteine 65, cysteine 16–cysteine 37, cysteine 23–cysteine 47, and cysteine 27–cysteine 49. Serine 67 is subject to Serine amide.

This sequence belongs to the long (4 C-C) scorpion toxin superfamily. Sodium channel inhibitor family. Alpha subfamily. In terms of assembly, monomer. In terms of tissue distribution, expressed by the venom gland.

It localises to the secreted. Its function is as follows. Alpha toxins bind voltage-independently at site-3 of sodium channels (Nav) and inhibit the inactivation of the activated channels, thereby blocking neuronal transmission. The dissociation is voltage-dependent. This alpha-like toxin is highly toxic to insects and competes with LqhaIT on binding to insect sodium channels. Differs from classical anti-mammalian alpha-toxins as it inhibits sodium channel inactivation in cell bodies of hippocampus brain neurons, on which the anti-mammalian Lqh2 is inactive, and is unable to affect Nav1.2 in the rat brain, on which Lqh2 is highly active. Moreover, its pharmacological properties are unique in that its binding affinity for insect channels drops &gt;30-fold at pH 8.5 versus pH 6.5, and its rate of association with receptor site-3 on both insect and mammalian sodium channels is 4-15-fold slower compared with LqhaIT and Lqh2. In Leiurus hebraeus (Hebrew deathstalker scorpion), this protein is Alpha-like toxin Lqh3.